The sequence spans 145 residues: Basic phospholipase A2 beta-bungarotoxin A2 chain (145 aa).

Positions 1–17 are cleaved as a signal peptide; the sequence is MLIFLWCGAVCVSLLGA. The propeptide occupies 18 to 25; it reads ANIPPHPL. 6 cysteine pairs are disulfide-bonded: cysteine 52–cysteine 144, cysteine 54–cysteine 70, cysteine 69–cysteine 125, cysteine 76–cysteine 118, cysteine 86–cysteine 111, and cysteine 104–cysteine 116. Tyrosine 53, glycine 55, and glycine 57 together coordinate Ca(2+). The active site involves histidine 73. Aspartate 74 serves as a coordination point for Ca(2+). Residue aspartate 119 is part of the active site.

This sequence belongs to the phospholipase A2 family. Group I subfamily. D49 sub-subfamily. In terms of assembly, heterodimer; disulfide-linked. The A chains have phospholipase A2 activity and the B chains show homology with the basic protease inhibitors. The A2 chain is found in beta-3 and beta-4 bungarotoxins. The cofactor is Ca(2+). Expressed by the venom gland.

Its subcellular location is the secreted. The catalysed reaction is a 1,2-diacyl-sn-glycero-3-phosphocholine + H2O = a 1-acyl-sn-glycero-3-phosphocholine + a fatty acid + H(+). Snake venom phospholipase A2 (PLA2) that inhibits neuromuscular transmission by blocking acetylcholine release from the nerve termini. PLA2 catalyzes the calcium-dependent hydrolysis of the 2-acyl groups in 3-sn-phosphoglycerides. The polypeptide is Basic phospholipase A2 beta-bungarotoxin A2 chain (Bungarus multicinctus (Many-banded krait)).